A 159-amino-acid chain; its full sequence is RNA pyrophosphohydrolase (159 aa).

One can recognise a Nudix hydrolase domain in the interval glycine 6–lysine 149. Residues glycine 38–glycine 59 carry the Nudix box motif.

It belongs to the Nudix hydrolase family. RppH subfamily. The cofactor is a divalent metal cation.

Its function is as follows. Accelerates the degradation of transcripts by removing pyrophosphate from the 5'-end of triphosphorylated RNA, leading to a more labile monophosphorylated state that can stimulate subsequent ribonuclease cleavage. This chain is RNA pyrophosphohydrolase, found in Baumannia cicadellinicola subsp. Homalodisca coagulata.